A 445-amino-acid chain; its full sequence is Histamine H3 receptor (445 aa).

Residues 1-39 (MERAPPDGLMNASGALAGEAAAAGGARGFSAAWTAVLAA) are Extracellular-facing. N-linked (GlcNAc...) asparagine glycosylation is present at Asn11. The helical transmembrane segment at 40–60 (LMALLIVATVLGNALVMLAFV) threads the bilayer. The Cytoplasmic portion of the chain corresponds to 61 to 70 (ADSSLRTQNN). Residues 71 to 91 (FFLLNLAISDFLVGAFCIPLY) traverse the membrane as a helical segment. The Extracellular portion of the chain corresponds to 92–108 (VPYVLTGRWTFGRGLCK). A disulfide bridge links Cys107 with Cys188. A helical membrane pass occupies residues 109 to 129 (LWLVVDYLLCASSVFNIVLIS). At 130–156 (YDRFLSVTRAVSYRAQQGDTRRAVRKM) the chain is on the cytoplasmic side. A helical transmembrane segment spans residues 157–177 (ALVWVLAFLLYGPAILSWEYL). Over 178–196 (SGGSSIPEGHCYAEFFYNW) the chain is Extracellular. Residues 197-217 (YFLITASTLEFFTPFLSVTFF) traverse the membrane as a helical segment. At 218-359 (NLSIYLNIQR…LSRDKKVAKS (142 aa)) the chain is on the cytoplasmic side. Disordered regions lie at residues 234–259 (DGGR…PSCW) and 273–336 (HRYG…LEKR). Over residues 241–256 (PEPPPDAQPSPPPAPP) the composition is skewed to pro residues. Residues 289–299 (AGLGGGSGGGA) show a composition bias toward gly residues. Residues 300–312 (AASPTSSSGSSSR) show a composition bias toward low complexity. The chain crosses the membrane as a helical span at residues 360 to 380 (LAIIVSIFGLCWAPYTLLMII). Residues 381–396 (RAACHGHCVPDYWYET) lie on the Extracellular side of the membrane. A helical transmembrane segment spans residues 397 to 417 (SFWLLWANSAVNPVLYPLCHY). The Cytoplasmic segment spans residues 418–445 (SFRRAFTKLLCPQKLKVQPHGSLEQCWK). Residue Ser439 is modified to Phosphoserine.

The protein belongs to the G-protein coupled receptor 1 family.

The protein localises to the cell membrane. Its function is as follows. The H3 subclass of histamine receptors could mediate the histamine signals in CNS and peripheral nervous system. Signals through the inhibition of adenylate cyclase and displays high constitutive activity (spontaneous activity in the absence of agonist). In Mus musculus (Mouse), this protein is Histamine H3 receptor (Hrh3).